Reading from the N-terminus, the 105-residue chain is NADH-quinone oxidoreductase subunit K (105 aa).

Helical transmembrane passes span 9–29, 34–54, and 65–85; these read PNYY…GVLV, IVLF…LVTF, and IIAF…LAII.

Belongs to the complex I subunit 4L family. As to quaternary structure, NDH-1 is composed of 14 different subunits. Subunits NuoA, H, J, K, L, M, N constitute the membrane sector of the complex.

It localises to the cell membrane. It carries out the reaction a quinone + NADH + 5 H(+)(in) = a quinol + NAD(+) + 4 H(+)(out). Functionally, NDH-1 shuttles electrons from NADH, via FMN and iron-sulfur (Fe-S) centers, to quinones in the respiratory chain. The immediate electron acceptor for the enzyme in this species is believed to be a menaquinone. Couples the redox reaction to proton translocation (for every two electrons transferred, four hydrogen ions are translocated across the cytoplasmic membrane), and thus conserves the redox energy in a proton gradient. The chain is NADH-quinone oxidoreductase subunit K from Salinispora arenicola (strain CNS-205).